The sequence spans 397 residues: 3-hydroxybenzoate 6-hydroxylase (397 aa).

Belongs to the 3-hydroxybenzoate 6-hydroxylase family. As to quaternary structure, monomer. FAD serves as cofactor.

It catalyses the reaction 3-hydroxybenzoate + NADH + O2 + H(+) = 2,5-dihydroxybenzoate + NAD(+) + H2O. Its activity is regulated as follows. Inhibited by copper, mercury and iron ions. Functionally, catalyzes the NAD- or NADP-dependent conversion of 3-hydroxybenzoate to gentisate. NAD and NADP function equally well. The sequence is that of 3-hydroxybenzoate 6-hydroxylase (mhbM) from Klebsiella oxytoca.